The following is a 310-amino-acid chain: HPr kinase/phosphorylase (310 aa).

Residues histidine 136 and lysine 157 contribute to the active site. ATP is bound at residue 151-158; it reads GDSGIGKS. Serine 158 contacts Mg(2+). Catalysis depends on aspartate 175, which acts as the Proton acceptor; for phosphorylation activity. Proton donor; for dephosphorylation activity. Positions 199–208 are important for the catalytic mechanism of both phosphorylation and dephosphorylation; the sequence is LEIRGLGIIN. Glutamate 200 contributes to the Mg(2+) binding site. Residue arginine 241 is part of the active site. The interval 262–267 is important for the catalytic mechanism of dephosphorylation; the sequence is PVRPGR.

Belongs to the HPrK/P family. Homohexamer. Requires Mg(2+) as cofactor.

The catalysed reaction is [HPr protein]-L-serine + ATP = [HPr protein]-O-phospho-L-serine + ADP + H(+). The enzyme catalyses [HPr protein]-O-phospho-L-serine + phosphate + H(+) = [HPr protein]-L-serine + diphosphate. Its function is as follows. Catalyzes the ATP- as well as the pyrophosphate-dependent phosphorylation of a specific serine residue in HPr, a phosphocarrier protein of the phosphoenolpyruvate-dependent sugar phosphotransferase system (PTS). HprK/P also catalyzes the pyrophosphate-producing, inorganic phosphate-dependent dephosphorylation (phosphorolysis) of seryl-phosphorylated HPr (P-Ser-HPr). The two antagonistic activities of HprK/P are regulated by several intracellular metabolites, which change their concentration in response to the absence or presence of rapidly metabolisable carbon sources (glucose, fructose, etc.) in the growth medium. Therefore, by controlling the phosphorylation state of HPr, HPrK/P is a sensor enzyme that plays a major role in the regulation of carbon metabolism and sugar transport: it mediates carbon catabolite repression (CCR), and regulates PTS-catalyzed carbohydrate uptake and inducer exclusion. This is HPr kinase/phosphorylase from Staphylococcus aureus (strain Mu3 / ATCC 700698).